Consider the following 935-residue polypeptide: C-1-tetrahydrofolate synthase, cytoplasmic (935 aa).

Methionine 1 carries the N-acetylmethionine modification. The tract at residues 2-291 is methylenetetrahydrofolate dehydrogenase and methenyltetrahydrofolate cyclohydrolase (D/C) domain; it reads APAEILNGKE…MLMQSTVESA (290 aa). Substrate contacts are provided by residues 52-56 and 99-101; these read YINVK and VQL. Residue lysine 56 is part of the active site. NADP(+) contacts are provided by residues 172–174 and serine 197; that span reads GRS. 272–276 contributes to the substrate binding site; that stretch reads PGGVG. A formyltetrahydrofolate synthetase domain region spans residues 310 to 935; that stretch reads LNLKTPVPSD…PETEQVNGLF (626 aa). Position 318 is a phosphoserine (serine 318). An ATP-binding site is contributed by 380–387; that stretch reads TPLGEGKS. Residues serine 413 and serine 490 each carry the phosphoserine modification.

The protein in the N-terminal section; belongs to the tetrahydrofolate dehydrogenase/cyclohydrolase family. This sequence in the C-terminal section; belongs to the formate--tetrahydrofolate ligase family. In terms of assembly, homodimer. Ubiquitous.

It localises to the cytoplasm. It catalyses the reaction (6R)-5,10-methylene-5,6,7,8-tetrahydrofolate + NADP(+) = (6R)-5,10-methenyltetrahydrofolate + NADPH. The enzyme catalyses (6R)-5,10-methenyltetrahydrofolate + H2O = (6R)-10-formyltetrahydrofolate + H(+). The catalysed reaction is (6S)-5,6,7,8-tetrahydrofolate + formate + ATP = (6R)-10-formyltetrahydrofolate + ADP + phosphate. The protein operates within one-carbon metabolism; tetrahydrofolate interconversion. In terms of biological role, trifunctional enzyme that catalyzes the interconversion of three forms of one-carbon-substituted tetrahydrofolate: (6R)-5,10-methylene-5,6,7,8-tetrahydrofolate, 5,10-methenyltetrahydrofolate and (6S)-10-formyltetrahydrofolate. These derivatives of tetrahydrofolate are differentially required in nucleotide and amino acid biosynthesis, (6S)-10-formyltetrahydrofolate being required for purine biosynthesis while (6R)-5,10-methylene-5,6,7,8-tetrahydrofolate is used for serine and methionine biosynthesis for instance. The sequence is that of C-1-tetrahydrofolate synthase, cytoplasmic (MTHFD1) from Homo sapiens (Human).